Consider the following 271-residue polypeptide: Undecaprenyl-diphosphatase 2 (271 aa).

Helical transmembrane passes span 1–21 (MNFF…LFPI), 46–66 (NFLE…IVYF), 88–108 (ALIV…EQTI), 111–131 (AFSD…LLFF), 146–166 (LKGW…IPGF), 190–210 (SMLL…PKLI), 220–240 (LSLI…YILM), and 251–271 (MLPF…SKAI).

This sequence belongs to the UppP family.

Its subcellular location is the cell membrane. It carries out the reaction di-trans,octa-cis-undecaprenyl diphosphate + H2O = di-trans,octa-cis-undecaprenyl phosphate + phosphate + H(+). Its function is as follows. Catalyzes the dephosphorylation of undecaprenyl diphosphate (UPP). Confers resistance to bacitracin. In Oenococcus oeni (strain ATCC BAA-331 / PSU-1), this protein is Undecaprenyl-diphosphatase 2.